The sequence spans 507 residues: Sugar transport protein 8 (507 aa).

Topologically, residues 1–21 are cytoplasmic; that stretch reads MAVVISSNGNSKSFDAKMTVY. A run of 12 helical transmembrane segments spans residues 22–42, 79–99, 116–136, 139–159, 166–186, 200–220, 281–301, 319–339, 346–366, 382–402, 419–439, and 448–468; these read VFIC…DIGI, FLQL…FFAS, IFFL…MLII, ILLG…LSEI, GGLN…ANIV, IALG…LLIC, FVIG…AIMF, LSAV…IFLV, FLLL…GIIL, LVVV…WGPL, GFAL…QAFL, and GIFF…LFFV. The Cytoplasmic portion of the chain corresponds to 469 to 507; sequence PETKGVSIDDMRDSVWKLHWYWKRFMLEEDEHDVEKRTD.

It belongs to the major facilitator superfamily. Sugar transporter (TC 2.A.1.1) family.

The protein localises to the membrane. Mediates an active uptake of hexoses, probably by sugar/hydrogen symport. The polypeptide is Sugar transport protein 8 (STP8) (Arabidopsis thaliana (Mouse-ear cress)).